Consider the following 254-residue polypeptide: Lipid uptake coordinator A (254 aa).

4 helical membrane passes run 5–25 (VAVLWHASFSIGAGVLYFYFV), 44–64 (LRIATGALVGLAALPVVFTLL), 85–105 (IMAHVLAGALIVGTAISEVWL), and 114–134 (LFGIYGAAAAIAVLGFFGFYL). The segment at 143–254 (PPPKPLKPKK…SGVQVAKVDE (112 aa)) is disordered. The segment covering 148 to 163 (LKPKKPKQRRLRRKKT) has biased composition (basic residues). Acidic residues predominate over residues 169-191 (AEPEAAEEAENTELAAQEDEEAV). Low complexity predominate over residues 192–220 (EAPPESIESPGGEPESATREAPAAETATA). Basic residues predominate over residues 227–244 (LRNRRPTGKTSHRRRRTR).

As to quaternary structure, interacts with the Mce1 and Mce4 accessory subunits Rv0199/OmamA, Rv0177/Mam1C and Rv3492c/Mam4B.

It localises to the cell membrane. Its function is as follows. Required for the import of both fatty acids and cholesterol during growth in macrophages and in axenic culture. Facilitates the uptake of these lipids by stabilizing protein subunits of the Mce1 and Mce4 multi-subunit transporters, which transport fatty acids and cholesterol, respectively. Required for full virulence in vivo. This Mycobacterium tuberculosis (strain ATCC 25618 / H37Rv) protein is Lipid uptake coordinator A.